The sequence spans 543 residues: uncharacterized protein (543 aa).

Residues 1 to 93 enclose the PE domain; that stretch reads MSFVTAAPEM…GGAYSSAEAA (93 aa). Residues 194 to 214 form a disordered region; it reads GGAGGPGGPTDVPAGTGGAGG.

The protein belongs to the mycobacterial PE family. PGRS subfamily.

This is an uncharacterized protein from Mycobacterium tuberculosis (strain CDC 1551 / Oshkosh).